Here is a 37-residue protein sequence, read N- to C-terminus: Large ribosomal subunit protein bL36 (37 aa).

It belongs to the bacterial ribosomal protein bL36 family.

This is Large ribosomal subunit protein bL36 from Histophilus somni (strain 129Pt) (Haemophilus somnus).